The primary structure comprises 770 residues: MADSGLVDHSPHHPTKAAQLSTASNVILIDNYDSFTWNVYQYLVLEGATVNVFRNDQITLEELIAKKPTQLVISPGPGHPETDAGISSAAIQYFSGKIPIFGVCMGQQCIITCFGGKVDVTGEILHGKTSPLKHDGKGAYEGLPGSLAVTRYHSLAGTHATIPDCLEVSSSVQLADDSNKDVIMGVRHKKLAVEGVQFHPESILTEYGRIMFRNFLKLTAGTWEGNGKHFGEQSSTTKATVPSNPPPKTDKKLSILERIYDHRRAAVAVQKTIPSQRPADLQAAYDLNLAPPQIPFPARLRQSPYPLSLMAEIKRASPSKGMIAENACAPAQARQYAKAGASVISVLTEPEWFKGSIDDLRAVRQSLEGMTNRPAILRKEFVFDEYQILEARLAGADTVLLIVKMLSVELLTRLYHYSRSLGMEPLVEVNTPEEMKIAVDLGAEVIGVNNRDLTSFEVDLGTTSRLMDQVPSSTIVCALSGISGPKDVEAYKKEGVKAILVGEALMRAADTATFIAELLGGSSQTVSSESRRSPLVKICGTRSEEAARAAIEAGADLIGIIMVQGRTGCVPDDVALPISQVVRSTPKPASQALHTSQEPPAATSVEYFDHSAKILRHPSRALLVGVFQNQPLDYILSQQQKLGLDVVQLHGSEPLEWAKLIPVPVIRKFGLDEPAIARRAYHSLPLLDSGVGGTGELLDQSRVQNVLDKDCGLRVILAGGLDPTNVAGIVQKLGESGRKVVGVDVSSGVESDGAQDLNKIRAFVQAVRGL.

Positions 25-225 constitute a Glutamine amidotransferase type-1 domain; sequence NVILIDNYDS…LKLTAGTWEG (201 aa). Residue 76–78 participates in L-glutamine binding; the sequence is GPG. The active-site Nucleophile; for GATase activity is cysteine 104. L-glutamine contacts are provided by residues glutamine 108 and 154–155; that span reads SL. Residues histidine 199 and glutamate 201 each act as for GATase activity in the active site. The interval 228-251 is disordered; sequence KHFGEQSSTTKATVPSNPPPKTDK. Over residues 232 to 242 the composition is skewed to polar residues; the sequence is EQSSTTKATVP. The indole-3-glycerol phosphate synthase stretch occupies residues 255 to 519; it reads ILERIYDHRR…DTATFIAELL (265 aa). Residues 535-770 are N-(5'-phosphoribosyl)anthranilate isomerase; that stretch reads LVKICGTRSE…RAFVQAVRGL (236 aa).

The enzyme catalyses N-(5-phospho-beta-D-ribosyl)anthranilate = 1-(2-carboxyphenylamino)-1-deoxy-D-ribulose 5-phosphate. It carries out the reaction 1-(2-carboxyphenylamino)-1-deoxy-D-ribulose 5-phosphate + H(+) = (1S,2R)-1-C-(indol-3-yl)glycerol 3-phosphate + CO2 + H2O. It catalyses the reaction chorismate + L-glutamine = anthranilate + pyruvate + L-glutamate + H(+). The protein operates within amino-acid biosynthesis; L-tryptophan biosynthesis; L-tryptophan from chorismate: step 1/5. It functions in the pathway amino-acid biosynthesis; L-tryptophan biosynthesis; L-tryptophan from chorismate: step 3/5. It participates in amino-acid biosynthesis; L-tryptophan biosynthesis; L-tryptophan from chorismate: step 4/5. In terms of biological role, trifunctional enzyme bearing the Gln amidotransferase (GATase) domain of anthranilate synthase, indole-glycerolphosphate synthase, and phosphoribosylanthranilate isomerase activities. This is Multifunctional tryptophan biosynthesis protein (trpC) from Aspergillus niger.